The following is a 170-amino-acid chain: Ribosome maturation factor RimM (170 aa).

Residues 97-170 form the PRC barrel domain; it reads KPDEYYWVDL…LVVVDWDPEF (74 aa).

Belongs to the RimM family. In terms of assembly, binds ribosomal protein uS19.

It localises to the cytoplasm. Its function is as follows. An accessory protein needed during the final step in the assembly of 30S ribosomal subunit, possibly for assembly of the head region. Essential for efficient processing of 16S rRNA. May be needed both before and after RbfA during the maturation of 16S rRNA. It has affinity for free ribosomal 30S subunits but not for 70S ribosomes. This Stenotrophomonas maltophilia (strain K279a) protein is Ribosome maturation factor RimM.